Reading from the N-terminus, the 123-residue chain is Large ribosomal subunit protein bL12 (123 aa).

The protein belongs to the bacterial ribosomal protein bL12 family. Homodimer. Part of the ribosomal stalk of the 50S ribosomal subunit. Forms a multimeric L10(L12)X complex, where L10 forms an elongated spine to which 2 to 4 L12 dimers bind in a sequential fashion. Binds GTP-bound translation factors.

Forms part of the ribosomal stalk which helps the ribosome interact with GTP-bound translation factors. Is thus essential for accurate translation. This chain is Large ribosomal subunit protein bL12, found in Salmonella arizonae (strain ATCC BAA-731 / CDC346-86 / RSK2980).